A 61-amino-acid polypeptide reads, in one-letter code: Large ribosomal subunit protein bL28 (61 aa).

Positions 1 to 26 are disordered; it reads MAKDFVTGKHTRFGNTRSHALNHSRR.

The protein belongs to the bacterial ribosomal protein bL28 family.

The chain is Large ribosomal subunit protein bL28 from Pediococcus pentosaceus (strain ATCC 25745 / CCUG 21536 / LMG 10740 / 183-1w).